Consider the following 753-residue polypeptide: Inactive protein-tyrosine phosphatase egg-5 (753 aa).

Disordered regions lie at residues 26–46 (TSLQ…STDN) and 77–116 (RKKV…YAAP). Residues 35-46 (NTDDSSADSTDN) are compositionally biased toward low complexity. A compositionally biased stretch (basic and acidic residues) spans 84-94 (AQKDRRSKERL). The Tyrosine-protein phosphatase domain occupies 408 to 661 (MERRFEILEN…IFVHRLVAFF (254 aa)).

The protein belongs to the protein-tyrosine phosphatase family. Part of a complex, consisting of pseudophosphatases egg-3, egg-4, egg-5 and kinase mbk-2; this complex is required for the oocyte-to-zygote transition. Interacts (via tyrosine-protein phosphatase domain) with kinase mbk-2 (via 'Tyr-619' and 'Tyr-621'); mbk-2 tyrosine phosphorylation enhances the interaction.

The protein localises to the cytoplasm. It is found in the cell cortex. Inactive phosphatase which acts redundantly with egg-4 in the oocyte-to-zygote transition. Required for polarized cortical actin cytoskeleton rearrangement in the oocyte before and after fertilization. Together with egg-4, required for the cortical localization of kinase mbk-2 in maturing oocyte until the end of meiosis I. Also required for kinase mbk-2, pseudophosphatase egg-3 and chitin synthase chs-1 localization to cytoplasmic foci after fertilization. The polypeptide is Inactive protein-tyrosine phosphatase egg-5 (Caenorhabditis elegans).